A 167-amino-acid polypeptide reads, in one-letter code: Glucose-6-phosphate isomerase (167 aa).

E54 serves as the catalytic Proton donor. H85 is an active-site residue.

This sequence belongs to the GPI family.

It is found in the cytoplasm. It carries out the reaction alpha-D-glucose 6-phosphate = beta-D-fructose 6-phosphate. Its pathway is carbohydrate biosynthesis; gluconeogenesis. The protein operates within carbohydrate degradation; glycolysis; D-glyceraldehyde 3-phosphate and glycerone phosphate from D-glucose: step 2/4. Its function is as follows. Catalyzes the reversible isomerization of glucose-6-phosphate to fructose-6-phosphate. The chain is Glucose-6-phosphate isomerase from Klebsiella oxytoca.